A 176-amino-acid polypeptide reads, in one-letter code: Flavodoxin (176 aa).

The Flavodoxin-like domain occupies 4–172 (IGIFFGTDTG…RLASWLEEIK (169 aa)).

This sequence belongs to the flavodoxin family. Requires FMN as cofactor.

Functionally, low-potential electron donor to a number of redox enzymes. NifF is the electron donor to nitrogenase. This Klebsiella pneumoniae protein is Flavodoxin (nifF).